Here is a 462-residue protein sequence, read N- to C-terminus: SET domain-containing protein SmydA-8, isoform A (462 aa).

The SET domain maps to 55 to 287 (PNWTISSSTV…KGGEITTTYT (233 aa)).

Belongs to the class V-like SAM-binding methyltransferase superfamily.

The chain is SET domain-containing protein SmydA-8, isoform A from Drosophila melanogaster (Fruit fly).